The following is a 145-amino-acid chain: 3-dehydroquinate dehydratase (145 aa).

The active-site Proton acceptor is the Tyr-24. Residues Asn-76, His-82, and Asp-89 each contribute to the substrate site. The active-site Proton donor is His-102. Residues 103 to 104 (LS) and Arg-113 contribute to the substrate site.

The protein belongs to the type-II 3-dehydroquinase family. As to quaternary structure, homododecamer.

It catalyses the reaction 3-dehydroquinate = 3-dehydroshikimate + H2O. Its pathway is metabolic intermediate biosynthesis; chorismate biosynthesis; chorismate from D-erythrose 4-phosphate and phosphoenolpyruvate: step 3/7. In terms of biological role, catalyzes a trans-dehydration via an enolate intermediate. The chain is 3-dehydroquinate dehydratase from Nitrosomonas eutropha (strain DSM 101675 / C91 / Nm57).